A 361-amino-acid chain; its full sequence is Mitogen-activated protein kinase 1 (361 aa).

In terms of domain architecture, Protein kinase spans 28-316; the sequence is YINLAYIGEG…VEAALAHPYL (289 aa). ATP-binding positions include 34-42 and Lys-57; that span reads IGEGAYGMV. The active-site Proton acceptor is Asp-152. Thr-188 bears the Phosphothreonine mark. The TXY signature appears at 188–190; it reads TEY. Tyr-190 bears the Phosphotyrosine mark.

It belongs to the protein kinase superfamily. CMGC Ser/Thr protein kinase family. MAP kinase subfamily. As to quaternary structure, interacts with CDK2AP2. The cofactor is Mg(2+). In terms of processing, dually phosphorylated on Thr-188 and Tyr-190, which activates the enzyme. As to expression, expressed in the central nervous system, kidney, liver, intestine and the hematopoietic system. Also found in heart, muscle, pancreas and lung.

The protein resides in the cytoplasm. The protein localises to the cytoskeleton. Its subcellular location is the microtubule organizing center. It is found in the centrosome. It localises to the spindle. The enzyme catalyses L-seryl-[protein] + ATP = O-phospho-L-seryl-[protein] + ADP + H(+). It carries out the reaction L-threonyl-[protein] + ATP = O-phospho-L-threonyl-[protein] + ADP + H(+). Its activity is regulated as follows. Activated by tyrosine phosphorylation during the M phase of the meiotic cell cycle. Dephosphorylated and inactivated by DUSP1. Its function is as follows. Serine/threonine kinase which acts as an essential component of the MAP kinase signal transduction pathway. Plays an important role in the MAPK/ERK cascade. Depending on the cellular context, this cascade mediates diverse biological functions such as cell growth, adhesion, survival and differentiation through the regulation of transcription, translation, cytoskeletal rearrangements. The MAPK/ERK cascade also plays a role in initiation and regulation of meiosis, mitosis, and postmitotic functions in differentiated cells by phosphorylating a number of transcription factors. Many of the substrates are localized in the nucleus, and seem to participate in the regulation of transcription upon stimulation. However, other substrates are found in the cytosol as well as in other cellular organelles, and those are responsible for processes such as translation, mitosis and apoptosis. Moreover, the MAPK/ERK cascade is also involved in the regulation of the endosomal dynamics, including lysosome processing and endosome cycling through the perinuclear recycling compartment (PNRC); as well as in the fragmentation of the Golgi apparatus during mitosis. Phosphorylates microtubule-associated protein 2 (MAP2), myelin basic protein (MBP) and Elk-1. Phosphorylates dual specificity protein phosphatase 1 (DUSP1) during meiosis, increasing its stability. Activated by M phase promoting factor (MPF). Plays a role in the spindle assembly checkpoint. This chain is Mitogen-activated protein kinase 1 (mapk1), found in Xenopus laevis (African clawed frog).